We begin with the raw amino-acid sequence, 97 residues long: U6-theraphotoxin-Hhn1a 1 (97 aa).

A signal peptide spans 1–33 (MLIKQFSRRSKNMKVQILLAFAALFVLAVGSYA). A propeptide spanning residues 34-61 (SESKKLDLRDALFSAMFSADYQLNPQER) is cleaved from the precursor. Disulfide bonds link C63–C77, C70–C82, and C76–C89.

Belongs to the neurotoxin 10 (Hwtx-1) family. 12 (Hntx-12) subfamily. Expressed by the venom gland.

The protein resides in the secreted. In terms of biological role, ion channel inhibitor. This Cyriopagopus hainanus (Chinese bird spider) protein is U6-theraphotoxin-Hhn1a 1.